The chain runs to 295 residues: Ribosomal RNA small subunit methyltransferase A (295 aa).

S-adenosyl-L-methionine-binding residues include Asn-29, Leu-31, Gly-56, Glu-77, Asp-102, and Asn-128.

This sequence belongs to the class I-like SAM-binding methyltransferase superfamily. rRNA adenine N(6)-methyltransferase family. RsmA subfamily.

Its subcellular location is the cytoplasm. The catalysed reaction is adenosine(1518)/adenosine(1519) in 16S rRNA + 4 S-adenosyl-L-methionine = N(6)-dimethyladenosine(1518)/N(6)-dimethyladenosine(1519) in 16S rRNA + 4 S-adenosyl-L-homocysteine + 4 H(+). Functionally, specifically dimethylates two adjacent adenosines (A1518 and A1519) in the loop of a conserved hairpin near the 3'-end of 16S rRNA in the 30S particle. May play a critical role in biogenesis of 30S subunits. This is Ribosomal RNA small subunit methyltransferase A from Listeria innocua serovar 6a (strain ATCC BAA-680 / CLIP 11262).